A 347-amino-acid chain; its full sequence is sn-1 oleoyl-lipid 12-desaturase (347 aa).

2 helical membrane-spanning segments follow: residues 41-63 and 67-85; these read AWSRVLLSVAAVVGCYALLAIAP and LLPVWFLTGTTLTGFFVIG. The Histidine box-1 motif lies at 86 to 90; the sequence is HDCGH. Residues 98 to 118 traverse the membrane as a helical segment; it reads WVNNLVGHLAFLPLIYPFHSW. The Histidine box-2 signature appears at 122 to 126; the sequence is HNHHH. The next 3 helical transmembrane spans lie at 164 to 184, 196 to 216, and 218 to 238; these read LWWLASVIHQLKLHFNWFAFE, LFVIIAGAIAFPVMFYTLGVW, and VVKFWLMPWLGYHFWMSTFTL. The Histidine box-3 motif lies at 286 to 290; sequence HHLST.

The protein belongs to the fatty acid desaturase type 2 family. Requires Fe(2+) as cofactor.

Its subcellular location is the membrane. The enzyme catalyses a 1-[(9Z)-octadecenoyl]-2-acyl-glycerolipid + 2 reduced [2Fe-2S]-[ferredoxin] + O2 + 2 H(+) = a 1-[(9Z,12Z)-octadecdienoyl]-2-acyl-glycerolipid + 2 oxidized [2Fe-2S]-[ferredoxin] + 2 H2O. It participates in lipid metabolism; polyunsaturated fatty acid biosynthesis. Desaturase involved in fatty acid biosynthesis. Introduces a double bond at carbon 12 of oleoyl groups (18:1) attached to the sn-1 position of the glycerol moiety of membrane glycerolipids. Can also efficiently catalyze the desaturation of palmitoleic acid (16:1) in vitro. This chain is sn-1 oleoyl-lipid 12-desaturase, found in Picosynechococcus sp. (strain ATCC 27264 / PCC 7002 / PR-6) (Agmenellum quadruplicatum).